Here is a 299-residue protein sequence, read N- to C-terminus: MTFKSGFVAILGRPNVGKSTFLNHVMGQKIAIMSDKAQTTRNKIMGIYTTDKEQIVFIDTPGIHKPKTALGDFMVEAAYSTLREVDTVLFMVPADEPRGKGDDMIIERLKAAKVPVILVVNKIDKVHPDQLLAQIDDFRQQMDFKEIVPISALQGNNVSRLVDILSENLEEGFQYFPEDQITDHPERFLVSEMIREKVLMLTREEIPHSVAVVIDSMKRDEETDKVHIRATIMVERDSQKGIIIGKGGSMLKKIGSMARRDIELMLGDKVFLETWVKVKKNWRDKKLDLADFGYNKKEY.

The Era-type G domain maps to 4-171 (KSGFVAILGR…VDILSENLEE (168 aa)). A G1 region spans residues 12 to 19 (GRPNVGKS). 12–19 (GRPNVGKS) contributes to the GTP binding site. The G2 stretch occupies residues 38–42 (QTTRN). A G3 region spans residues 59 to 62 (DTPG). Residues 59 to 63 (DTPGI) and 121 to 124 (NKID) contribute to the GTP site. Residues 121 to 124 (NKID) form a G4 region. Residues 150–152 (ISA) are G5. The KH type-2 domain occupies 202 to 280 (TREEIPHSVA…FLETWVKVKK (79 aa)).

The protein belongs to the TRAFAC class TrmE-Era-EngA-EngB-Septin-like GTPase superfamily. Era GTPase family. Monomer.

The protein localises to the cytoplasm. It is found in the cell membrane. In terms of biological role, an essential GTPase that binds both GDP and GTP, with rapid nucleotide exchange. Plays a role in 16S rRNA processing and 30S ribosomal subunit biogenesis and possibly also in cell cycle regulation and energy metabolism. This chain is GTPase Era, found in Streptococcus gordonii (strain Challis / ATCC 35105 / BCRC 15272 / CH1 / DL1 / V288).